The chain runs to 404 residues: Calcium/calmodulin-dependent protein kinase cmkB (404 aa).

In terms of domain architecture, Protein kinase spans 18-279 (YKTGKTLGAG…AHQALQHPWI (262 aa)). ATP contacts are provided by residues 24 to 32 (LGAGLYSVV) and K47. The Proton acceptor role is filled by D141. Residue T179 is modified to Phosphothreonine; by cmkC. Residues 279–322 (INPPYDTTDDLGSGEDLLPNIKKNFNARRTLHKAIDTVRAINKL) are autoinhibitory domain. Residues 301-323 (KNFNARRTLHKAIDTVRAINKLR) form a calmodulin-binding region. Residues 336–404 (VDPKPEHVNG…WSRTAPRSER (69 aa)) are disordered. Basic and acidic residues-rich tracts occupy residues 338–370 (PKPE…DSRS) and 379–389 (QIREQERKVKE).

This sequence belongs to the protein kinase superfamily. CAMK Ser/Thr protein kinase family. CaMK subfamily. In terms of processing, phosphorylated by cmkC on Thr-179.

The enzyme catalyses L-seryl-[protein] + ATP = O-phospho-L-seryl-[protein] + ADP + H(+). It catalyses the reaction L-threonyl-[protein] + ATP = O-phospho-L-threonyl-[protein] + ADP + H(+). Activated by Ca(2+)/calmodulin. Binding of calmodulin results in conformational change that relieves intrasteric autoinhibition and allows phosphorylation of Thr-179 within the activation loop by cmkC. In terms of biological role, calcium/calmodulin-dependent protein kinase that operates in the calcium-triggered CaMKK-CaMK1 signaling cascade. Required in G1-phase of the cell cycle for proper timing of the initial nuclear division after germination, but not for subsequent mitoses. Required for the normal temporal regulation of nimX activity. The protein is Calcium/calmodulin-dependent protein kinase cmkB of Emericella nidulans (Aspergillus nidulans).